Here is a 449-residue protein sequence, read N- to C-terminus: Phosphoglucosamine mutase (449 aa).

Ser-101 serves as the catalytic Phosphoserine intermediate. Mg(2+)-binding residues include Ser-101, Asp-240, Asp-242, and Asp-244. Phosphoserine is present on Ser-101.

The protein belongs to the phosphohexose mutase family. Mg(2+) is required as a cofactor. Post-translationally, activated by phosphorylation.

It catalyses the reaction alpha-D-glucosamine 1-phosphate = D-glucosamine 6-phosphate. Its function is as follows. Catalyzes the conversion of glucosamine-6-phosphate to glucosamine-1-phosphate. The chain is Phosphoglucosamine mutase from Streptococcus mutans serotype c (strain ATCC 700610 / UA159).